Here is a 340-residue protein sequence, read N- to C-terminus: ATPase GET3 (340 aa).

ATP is bound at residue 35–42 (KGGVGKTT). D64 is a catalytic residue. E245 and N272 together coordinate ATP. C283 and C286 together coordinate Zn(2+).

It belongs to the arsA ATPase family. Homodimer.

The protein resides in the cytoplasm. Its subcellular location is the endoplasmic reticulum. ATPase required for the post-translational delivery of tail-anchored (TA) proteins to the endoplasmic reticulum. Recognizes and selectively binds the transmembrane domain of TA proteins in the cytosol. This complex then targets to the endoplasmic reticulum by membrane-bound receptors, where the tail-anchored protein is released for insertion. This process is regulated by ATP binding and hydrolysis. ATP binding drives the homodimer towards the closed dimer state, facilitating recognition of newly synthesized TA membrane proteins. ATP hydrolysis is required for insertion. Subsequently, the homodimer reverts towards the open dimer state, lowering its affinity for the membrane-bound receptor, and returning it to the cytosol to initiate a new round of targeting. This Chaetomium globosum (strain ATCC 6205 / CBS 148.51 / DSM 1962 / NBRC 6347 / NRRL 1970) (Soil fungus) protein is ATPase GET3.